A 266-amino-acid polypeptide reads, in one-letter code: 4-hydroxy-tetrahydrodipicolinate reductase (266 aa).

Residues 8–13 (GAAGRM) and Glu33 each bind NAD(+). Arg34 is an NADP(+) binding site. NAD(+)-binding positions include 97 to 99 (GST) and 121 to 124 (APNM). The active-site Proton donor/acceptor is His154. A (S)-2,3,4,5-tetrahydrodipicolinate-binding site is contributed by His155. Lys158 serves as the catalytic Proton donor. Residue 164–165 (GT) participates in (S)-2,3,4,5-tetrahydrodipicolinate binding.

This sequence belongs to the DapB family.

It localises to the cytoplasm. It carries out the reaction (S)-2,3,4,5-tetrahydrodipicolinate + NAD(+) + H2O = (2S,4S)-4-hydroxy-2,3,4,5-tetrahydrodipicolinate + NADH + H(+). The catalysed reaction is (S)-2,3,4,5-tetrahydrodipicolinate + NADP(+) + H2O = (2S,4S)-4-hydroxy-2,3,4,5-tetrahydrodipicolinate + NADPH + H(+). The protein operates within amino-acid biosynthesis; L-lysine biosynthesis via DAP pathway; (S)-tetrahydrodipicolinate from L-aspartate: step 4/4. Catalyzes the conversion of 4-hydroxy-tetrahydrodipicolinate (HTPA) to tetrahydrodipicolinate. This Trichlorobacter lovleyi (strain ATCC BAA-1151 / DSM 17278 / SZ) (Geobacter lovleyi) protein is 4-hydroxy-tetrahydrodipicolinate reductase.